Consider the following 157-residue polypeptide: Cyclic pyranopterin monophosphate synthase (157 aa).

Substrate contacts are provided by residues 74–76 and 110–111; these read MCH and ME. Aspartate 125 is an active-site residue.

This sequence belongs to the MoaC family. In terms of assembly, homohexamer; trimer of dimers.

It catalyses the reaction (8S)-3',8-cyclo-7,8-dihydroguanosine 5'-triphosphate = cyclic pyranopterin phosphate + diphosphate. It functions in the pathway cofactor biosynthesis; molybdopterin biosynthesis. Catalyzes the conversion of (8S)-3',8-cyclo-7,8-dihydroguanosine 5'-triphosphate to cyclic pyranopterin monophosphate (cPMP). This Peptoclostridium acidaminophilum (Eubacterium acidaminophilum) protein is Cyclic pyranopterin monophosphate synthase.